The sequence spans 216 residues: Protein Syd (216 aa).

The protein belongs to the Syd family.

It is found in the cell inner membrane. Functionally, interacts with the SecY protein in vivo. May bind preferentially to an uncomplexed state of SecY, thus functioning either as a chelating agent for excess SecY in the cell or as a regulatory factor that negatively controls the translocase function. This is Protein Syd from Shewanella baltica (strain OS195).